Reading from the N-terminus, the 368-residue chain is Propane 2-monooxygenase, hydroxylase component small subunit (368 aa).

This sequence belongs to the TmoE/XamoE family. As to quaternary structure, the propane 2-monooxygenase multicomponent enzyme system is composed of an electron transfer component and a monooxygenase component interacting with the effector protein MimD. The electron transfer component is composed of a reductase (MimB), and the monooxygenase component is formed by a large subunit (MimA) and a small subunit (MimC). Requires the presence of the chaperonin-like protein MimG to ensure a productive folding, resulting of a soluble MimC, which leads to the active form of MimABCD.

It catalyses the reaction propane + NADH + O2 + H(+) = propan-2-ol + NAD(+) + H2O. The enzyme catalyses acetone + NADH + O2 + H(+) = hydroxyacetone + NAD(+) + H2O. It carries out the reaction butan-2-one + NADH + O2 + H(+) = 1-hydroxy-2-butanone + NAD(+) + H2O. The catalysed reaction is phenol + NADH + O2 + H(+) = hydroquinone + NAD(+) + H2O. In terms of biological role, component of the propane 2-monooxygenase multicomponent enzyme system which is involved in the degradation of propane via the O2-dependent hydroxylation of propane. Also involved in the degradation of acetone via the O2-dependent hydroxylation of acetone. Also able to catalyze the oxidation of phenol, methylethylketone (2-butanone), 1-propanol and 2-propanol. The protein is Propane 2-monooxygenase, hydroxylase component small subunit of Mycolicibacterium goodii (Mycobacterium goodii).